The primary structure comprises 412 residues: 2-methylacyl-CoA dehydrogenase, mitochondrial (412 aa).

Residues 1 to 25 (MHKLFAVRSLSSAIVKSFKSLQNQQ) constitute a mitochondrion transit peptide. Residues 154-163 (LAMSEPNAGS) and 187-189 (WCT) contribute to the FAD site. S163 contacts substrate. Substrate contacts are provided by residues 209 to 210 (SK), Y264, and 271 to 274 (DLER). The active-site Proton acceptor is E273. FAD is bound by residues R299, Q310, and 367–371 (QCLGG). 394–395 (AG) lines the substrate pocket. 396–398 (TSE) contacts FAD.

Belongs to the acyl-CoA dehydrogenase family. Homotetramer. It depends on FAD as a cofactor. As to expression, expressed in flowers.

It is found in the mitochondrion. The catalysed reaction is 2-methylbutanoyl-CoA + oxidized [electron-transfer flavoprotein] + H(+) = (2E)-2-methylbut-2-enoyl-CoA + reduced [electron-transfer flavoprotein]. Short/branched-chain acyl-CoA dehydrogenase (SBCAD). Uses 2-methylbutanoyl-CoA as substrate. Minor activity with the straight-chain substrates, butanoyl-CoA, valeryl-CoA, hexanoyl-CoA, and octanoyl-CoA but no activity with isovaleryl-CoA. The chain is 2-methylacyl-CoA dehydrogenase, mitochondrial (2MBCD) from Solanum tuberosum (Potato).